The sequence spans 138 residues: Large ribosomal subunit protein uL16 (138 aa).

It belongs to the universal ribosomal protein uL16 family. Part of the 50S ribosomal subunit.

Binds 23S rRNA and is also seen to make contacts with the A and possibly P site tRNAs. The protein is Large ribosomal subunit protein uL16 of Paramagnetospirillum magneticum (strain ATCC 700264 / AMB-1) (Magnetospirillum magneticum).